A 316-amino-acid polypeptide reads, in one-letter code: DNA-directed RNA polymerase III subunit RPC6 (316 aa).

Alanine 2 is subject to N-acetylalanine. Residues lysine 5 and lysine 7 each participate in a glycyl lysine isopeptide (Lys-Gly) (interchain with G-Cter in SUMO2) cross-link. [4Fe-4S] cluster-binding residues include cysteine 287, cysteine 290, cysteine 296, and cysteine 307.

This sequence belongs to the eukaryotic RPC34/RPC39 RNA polymerase subunit family. Component of the RNA polymerase III complex consisting of 17 subunits: a ten-subunit horseshoe-shaped catalytic core composed of POLR3A/RPC1, POLR3B/RPC2, POLR1C/RPAC1, POLR1D/RPAC2, POLR3K/RPC10, POLR2E/RPABC1, POLR2F/RPABC2, POLR2H/RPABC3, POLR2K/RPABC4 and POLR2L/RPABC5; a mobile stalk composed of two subunits POLR3H/RPC8 and CRCP/RPC9, protruding from the core and functioning primarily in transcription initiation; and additional subunits homologous to general transcription factors of the RNA polymerase II machinery, POLR3C/RPC3-POLR3F/RPC6-POLR3G/RPC7 heterotrimer required for transcription initiation and POLR3D/RPC4-POLR3E/RPC5 heterodimer involved in both transcription initiation and termination. Directly interacts with POLR3C. Interacts with TBP and TFIIIB90 and GTF3C4. Interacts with MAF1. As part of the RNA polymerase III complex, interacts with PKP2.

It is found in the nucleus. In terms of biological role, DNA-dependent RNA polymerase catalyzes the transcription of DNA into RNA using the four ribonucleoside triphosphates as substrates. Specific peripheric component of RNA polymerase III (Pol III) which synthesizes small non-coding RNAs including 5S rRNA, snRNAs, tRNAs and miRNAs from at least 500 distinct genomic loci. Part of POLR3C/RPC3-POLR3F/RPC6-POLR3G/RPC7 heterotrimer that coordinates the dynamics of Pol III stalk and clamp modules during the transition from apo to elongation state. Pol III plays a key role in sensing and limiting infection by intracellular bacteria and DNA viruses, including varicella zoster virus. Acts as a nuclear and cytosolic DNA sensor detecting AT-rich DNA, involved in innate immune response. Can sense non-self dsDNA that serves as template for transcription into dsRNA. The non-self RNA polymerase III transcripts, such as Epstein-Barr virus-encoded RNAs (EBERs) induce type I interferon and NF-kappa-B through the RIG-I pathway. Preferentially binds double-stranded DNA (dsDNA). The polypeptide is DNA-directed RNA polymerase III subunit RPC6 (POLR3F) (Bos taurus (Bovine)).